We begin with the raw amino-acid sequence, 201 residues long: Envelope glycoprotein (201 aa).

Over 1 to 148 (RRARYKKEPV…FNKSPWFTTL (148 aa)) the chain is Extracellular. The fusion peptide stretch occupies residues 10-30 (VSLTLALLLGGLTMGGIAAGV). The stretch at 39–75 (ATQQFQQLQAAIHDDLKEVEKSITNLEKSLTSLSEVV) forms a coiled coil. Positions 76–92 (LQNRRGLDLLFLKEGGL) are immunosuppression. Positions 93–101 (CAALKEECC) match the CX6CC motif. A helical membrane pass occupies residues 149–169 (ISTVMGPLIILLLILLFGPCI). A lipid anchor (S-palmitoyl cysteine; by host) is attached at cysteine 168. At 170–201 (LNRLVQFIKDRISVVQALVLTQQYHQLKTIGD) the chain is on the cytoplasmic side. Positions 193 to 196 (YHQL) match the YXXL motif; contains endocytosis signal motif.

In terms of assembly, the mature envelope protein (Env) consists of a trimer of SU-TM heterodimers attached by a labile interchain disulfide bond. Post-translationally, specific enzymatic cleavages in vivo yield mature proteins. Envelope glycoproteins are synthesized as an inactive precursor that is N-glycosylated and processed likely by host cell furin or by a furin-like protease in the Golgi to yield the mature SU and TM proteins. The cleavage site between SU and TM requires the minimal sequence [KR]-X-[KR]-R. The R-peptide is released from the C-terminus of the cytoplasmic tail of the TM protein upon particle formation as a result of proteolytic cleavage by the viral protease. Cleavage of this peptide is required for TM to become fusogenic. In terms of processing, the transmembrane protein is palmitoylated. The R-peptide is palmitoylated.

Its subcellular location is the virion membrane. The protein resides in the host cell membrane. In terms of biological role, the surface protein (SU) attaches the virus to the host cell by binding to its receptor. This interaction triggers the refolding of the transmembrane protein (TM) and is thought to activate its fusogenic potential by unmasking its fusion peptide. Fusion occurs at the host cell plasma membrane. The transmembrane protein (TM) acts as a class I viral fusion protein. Under the current model, the protein has at least 3 conformational states: pre-fusion native state, pre-hairpin intermediate state, and post-fusion hairpin state. During viral and target cell membrane fusion, the coiled coil regions (heptad repeats) assume a trimer-of-hairpins structure, positioning the fusion peptide in close proximity to the C-terminal region of the ectodomain. The formation of this structure appears to drive apposition and subsequent fusion of viral and target cell membranes. Membranes fusion leads to delivery of the nucleocapsid into the cytoplasm. In Mus musculus (Mouse), this protein is Envelope glycoprotein (env).